Reading from the N-terminus, the 93-residue chain is Small ribosomal subunit protein uS19 (93 aa).

It belongs to the universal ribosomal protein uS19 family.

In terms of biological role, protein S19 forms a complex with S13 that binds strongly to the 16S ribosomal RNA. In Campylobacter concisus (strain 13826), this protein is Small ribosomal subunit protein uS19.